The sequence spans 105 residues: Extracellular guanyl-specific ribonuclease Fl1 (105 aa).

2 disulfide bridges follow: C5/C101 and C23/C82. H39 is an active-site residue. E57 (proton acceptor) is an active-site residue. Catalysis depends on H90, which acts as the Proton donor.

It belongs to the ribonuclease N1/T1 family.

The enzyme catalyses [RNA] containing guanosine + H2O = an [RNA fragment]-3'-guanosine-3'-phosphate + a 5'-hydroxy-ribonucleotide-3'-[RNA fragment].. This is Extracellular guanyl-specific ribonuclease Fl1 from Gibberella baccata (Fusarium lateritium).